The chain runs to 271 residues: Metal-staphylopine import system ATP-binding protein CntD (271 aa).

Residues 6–251 (VKHLTITDTW…PEHVYTKYLL (246 aa)) enclose the ABC transporter domain. An ATP-binding site is contributed by 38-45 (GESGSGKS).

Belongs to the ABC transporter superfamily. As to quaternary structure, the complex is composed of two ATP-binding proteins (CntD and CntF), two transmembrane proteins (CntB and CntC) and a solute-binding protein (CntA).

The protein localises to the cell membrane. Part of the ABC transporter complex CntABCDF (Opp1) involved in the uptake of metal in complex with the metallophore staphylopine (StP). May be involved in the import of a large array of divalent metals ions such as nickel, cobalt, zinc, copper and iron. Probably responsible for energy coupling to the transport system. The sequence is that of Metal-staphylopine import system ATP-binding protein CntD from Staphylococcus aureus (strain Mu50 / ATCC 700699).